The chain runs to 290 residues: Cell division protein ZipA (290 aa).

Methionine 1 is a topological domain (periplasmic). The helical transmembrane segment at 2–22 (DIGLREWLIVIGLIVIAGILF) threads the bilayer. The Cytoplasmic portion of the chain corresponds to 23 to 290 (DGWRRMRGGK…HERRSLMQKR (268 aa)). Residues 66 to 143 (REPSFDEQDL…REKAPSVAAA (78 aa)) form a disordered region. Residues 81–99 (REGKERKGGKRQDEPRQGD) show a composition bias toward basic and acidic residues. Residues 100–114 (LDLDEGMALEADPSD) show a composition bias toward acidic residues.

It belongs to the ZipA family. In terms of assembly, interacts with FtsZ via their C-terminal domains.

It is found in the cell inner membrane. Its function is as follows. Essential cell division protein that stabilizes the FtsZ protofilaments by cross-linking them and that serves as a cytoplasmic membrane anchor for the Z ring. Also required for the recruitment to the septal ring of downstream cell division proteins. The protein is Cell division protein ZipA of Pseudomonas paraeruginosa (strain DSM 24068 / PA7) (Pseudomonas aeruginosa (strain PA7)).